The sequence spans 594 residues: Shugoshin (594 aa).

The stretch at 38–61 forms a coiled coil; it reads KITDMETKVSELVQENVSLRSRLS. Disordered stretches follow at residues 104 to 178, 201 to 266, 342 to 380, and 519 to 549; these read SGIH…KSSR, QLPI…TNKN, SKIKHSMKHPRTKLKGGQDDIMPHTDYDKDDEKRERRTR, and TKQQAIENNSSDPNVSDENENSNVKPTRTKQ. Residues 220 to 240 adopt a coiled-coil conformation; it reads EEESQENKHTKEEREDEGKEN. Residues 224–239 are compositionally biased toward basic and acidic residues; sequence QENKHTKEEREDEGKE. Positions 252 to 261 are enriched in polar residues; sequence SVTNTGTECS. The span at 343 to 355 shows a compositional bias: basic residues; the sequence is KIKHSMKHPRTKL. A compositionally biased stretch (basic and acidic residues) spans 357–376; that stretch reads GGQDDIMPHTDYDKDDEKRE. Composition is skewed to polar residues over residues 519–532 and 539–549; these read TKQQAIENNSSDPN and NSNVKPTRTKQ.

This sequence belongs to the shugoshin family.

The protein resides in the nucleus. Its subcellular location is the chromosome. The protein localises to the centromere. Functionally, plays a central role in chromosome cohesion during cell division by preventing premature dissociation of cohesin complex from centromeres after prophase, when most of cohesin complex dissociates from chromosomes arms. This Kluyveromyces lactis (strain ATCC 8585 / CBS 2359 / DSM 70799 / NBRC 1267 / NRRL Y-1140 / WM37) (Yeast) protein is Shugoshin (SGO1).